The following is a 345-amino-acid chain: Phenylalanine--tRNA ligase alpha subunit (345 aa).

Glu-259 contacts Mg(2+).

Belongs to the class-II aminoacyl-tRNA synthetase family. Phe-tRNA synthetase alpha subunit type 1 subfamily. Tetramer of two alpha and two beta subunits. Requires Mg(2+) as cofactor.

The protein resides in the cytoplasm. It carries out the reaction tRNA(Phe) + L-phenylalanine + ATP = L-phenylalanyl-tRNA(Phe) + AMP + diphosphate + H(+). The protein is Phenylalanine--tRNA ligase alpha subunit of Lactococcus lactis subsp. cremoris (strain SK11).